Reading from the N-terminus, the 311-residue chain is Energy-coupling factor transporter ATP-binding protein EcfA2 (311 aa).

The region spanning 3-265 is the ABC transporter domain; that stretch reads IKLKDVKFTF…IAFLEENNLQ (263 aa). 40-47 is a binding site for ATP; that stretch reads GQTGSGKT.

This sequence belongs to the ABC transporter superfamily. Energy-coupling factor EcfA family. In terms of assembly, forms a stable energy-coupling factor (ECF) transporter complex composed of 2 membrane-embedded substrate-binding proteins (S component), 2 ATP-binding proteins (A component) and 2 transmembrane proteins (T component).

Its subcellular location is the cell membrane. Its function is as follows. ATP-binding (A) component of a common energy-coupling factor (ECF) ABC-transporter complex. Unlike classic ABC transporters this ECF transporter provides the energy necessary to transport a number of different substrates. This chain is Energy-coupling factor transporter ATP-binding protein EcfA2, found in Mycoplasmopsis synoviae (strain 53) (Mycoplasma synoviae).